Consider the following 118-residue polypeptide: Large ribosomal subunit protein bL20 (118 aa).

It belongs to the bacterial ribosomal protein bL20 family. As to quaternary structure, part of the 50S ribosomal subunit. Contacts proteins L13 and L21.

Binds directly to 23S rRNA, probably serving to organize its structure. The chain is Large ribosomal subunit protein bL20 (rplT) from Deinococcus radiodurans (strain ATCC 13939 / DSM 20539 / JCM 16871 / CCUG 27074 / LMG 4051 / NBRC 15346 / NCIMB 9279 / VKM B-1422 / R1).